A 405-amino-acid polypeptide reads, in one-letter code: uncharacterized protein (405 aa).

Transmembrane regions (helical) follow at residues 19–39 (IVSI…PLAV), 47–67 (VMGF…FATL), 85–105 (IVVF…TAGL), 107–127 (ASLP…LGIG), 156–176 (GIVT…FYHW), 178–198 (GLQA…LLAI), 224–244 (GMAL…ITLF), 252–272 (GAAF…LLFP), 283–303 (VAMI…VATM), 309–329 (IGVL…GVVA), 344–364 (TYTV…GLVM), and 366–386 (WAGV…ALLL).

This sequence belongs to the major facilitator superfamily. YhhS family.

It is found in the cell inner membrane. This is an uncharacterized protein from Escherichia coli O6:H1 (strain CFT073 / ATCC 700928 / UPEC).